Reading from the N-terminus, the 95-residue chain is Small ribosomal subunit protein uS15 (95 aa).

This sequence belongs to the universal ribosomal protein uS15 family. Part of the 30S ribosomal subunit. Forms a bridge to the 50S subunit in the 70S ribosome, contacting the 23S rRNA.

Functionally, one of the primary rRNA binding proteins, it binds directly to 16S rRNA where it helps nucleate assembly of the platform of the 30S subunit by binding and bridging several RNA helices of the 16S rRNA. In terms of biological role, forms an intersubunit bridge (bridge B4) with the 23S rRNA of the 50S subunit in the ribosome. The sequence is that of Small ribosomal subunit protein uS15 from Streptomyces avermitilis (strain ATCC 31267 / DSM 46492 / JCM 5070 / NBRC 14893 / NCIMB 12804 / NRRL 8165 / MA-4680).